Reading from the N-terminus, the 297-residue chain is CASP-like protein 2U8 (297 aa).

The Cytoplasmic segment spans residues 1 to 10 (MLELYEKRRA). A helical membrane pass occupies residues 11–31 (LLLLRLAAMFLSLAALLITVL). At 32–64 (NREDGFFSINVFGSPQPILAKATADFTLVKGLK) the chain is on the extracellular side. The helical transmembrane segment at 65-85 (FFAGAMGIVAGYSFLQLAIAM) threads the bilayer. Residues 86 to 101 (ASIFSGAPSILGGKRM) lie on the Cytoplasmic side of the membrane. The chain crosses the membrane as a helical span at residues 102 to 122 (AWLCFVGDMTASHLCAAAAAV). The Extracellular portion of the chain corresponds to 123-148 (SAQLAYLGKRGAPMWSAVCTYFSHYC). Residues 149–169 (LVFGLAVILAFLATLAALLVA) form a helical membrane-spanning segment. Residues 170-297 (SISSYHLAYD…RVLEMETPCK (128 aa)) are Cytoplasmic-facing.

This sequence belongs to the Casparian strip membrane proteins (CASP) family. Homodimer and heterodimers.

The protein localises to the cell membrane. This is CASP-like protein 2U8 from Selaginella moellendorffii (Spikemoss).